The chain runs to 1892 residues: Kinesin-like protein KIN-12E (1892 aa).

The segment at 1–28 (MAGHGAGGRRASTSRAAARRVEAETNEN) is disordered. The Kinesin motor domain maps to 64-401 (NVQVLIRIRP…LKFAQRAKLI (338 aa)). 145–152 (GQTGSGKT) is a binding site for ATP. Coiled-coil stretches lie at residues 406–438 (KVNE…QQNM), 486–526 (SLRR…TTVK), 1066–1139 (LFSN…LHEQ), 1303–1357 (KLLQ…LAEN), and 1396–1528 (ISET…SYQI). Residues 1633–1649 (LHESNSDTGHTKFEKPS) are compositionally biased toward basic and acidic residues. The disordered stretch occupies residues 1633 to 1656 (LHESNSDTGHTKFEKPSGRTRGSG). The stretch at 1780–1841 (MDQRKADLLE…LVGSNQAIAE (62 aa)) forms a coiled coil. The tract at residues 1870–1892 (HARHEHSRLQAAKSSRTRRGSHQ) is disordered.

It belongs to the TRAFAC class myosin-kinesin ATPase superfamily. Kinesin family. KIN-12 subfamily.

The polypeptide is Kinesin-like protein KIN-12E (Oryza sativa subsp. japonica (Rice)).